We begin with the raw amino-acid sequence, 421 residues long: MEF2-activating motif and SAP domain-containing transcriptional regulator (421 aa).

The short motif at 12-28 (IIRSKFRSVLQLRIHRR) is the MEF2-binding element. Disordered stretches follow at residues 104–156 (PPEQ…PPSH), 188–296 (KAML…ASLT), and 322–406 (DQVE…ADLS). An SAP domain is found at 165-199 (LEELTVSELRQQLRLRGLPVSGTKAMLLERMRGGT). Residues 191 to 214 (LLERMRGGTPPRERPKPRREDKEA) show a composition bias toward basic and acidic residues. The transcription activation stretch occupies residues 208 to 421 (RREDKEAAAP…LLWELLPDPW (214 aa)). Polar residues predominate over residues 230 to 241 (RLPSTVKASATN). Over residues 260–292 (ASVPAPTPSPALAPTPTPAPVPAPAPAPFPTPP) the composition is skewed to pro residues. A compositionally biased stretch (low complexity) spans 347-372 (SPDSEGFSSVFSSSLPSPTSSLSPSP).

As to quaternary structure, interacts with MEF2C. Expressed in skeletal muscle, brain, placenta and spleen.

Its subcellular location is the nucleus. In terms of biological role, transcriptional coactivator. Stimulates the transcriptional activity of MEF2C. Stimulates MYOD1 activity in part via MEF2, resulting in an enhancement of skeletal muscle differentiation. The sequence is that of MEF2-activating motif and SAP domain-containing transcriptional regulator (Mamstr) from Mus musculus (Mouse).